We begin with the raw amino-acid sequence, 545 residues long: Methionine--tRNA ligase (545 aa).

Positions Pro13 to His23 match the 'HIGH' region motif. Zn(2+) is bound by residues Cys144, Cys147, Cys157, and Cys160. The short motif at Lys329 to Ser333 is the 'KMSKS' region element. ATP is bound at residue Lys332.

This sequence belongs to the class-I aminoacyl-tRNA synthetase family. MetG type 1 subfamily. Monomer. The cofactor is Zn(2+).

It is found in the cytoplasm. It carries out the reaction tRNA(Met) + L-methionine + ATP = L-methionyl-tRNA(Met) + AMP + diphosphate. Is required not only for elongation of protein synthesis but also for the initiation of all mRNA translation through initiator tRNA(fMet) aminoacylation. The sequence is that of Methionine--tRNA ligase from Vesicomyosocius okutanii subsp. Calyptogena okutanii (strain HA).